The sequence spans 132 residues: Translation initiation factor 5A (132 aa).

Lys-36 bears the Hypusine mark.

It belongs to the eIF-5A family.

The protein resides in the cytoplasm. Functionally, functions by promoting the formation of the first peptide bond. This is Translation initiation factor 5A (eIF5A) from Pyrobaculum neutrophilum (strain DSM 2338 / JCM 9278 / NBRC 100436 / V24Sta) (Thermoproteus neutrophilus).